The following is a 786-amino-acid chain: DNA ligase (786 aa).

Residues 32–36 (DAEYD), 81–82 (SL), and Glu121 contribute to the NAD(+) site. Lys123 (N6-AMP-lysine intermediate) is an active-site residue. Arg144, Glu181, Lys297, and Lys321 together coordinate NAD(+). Residues Cys415, Cys418, Cys445, and Cys451 each coordinate Zn(2+). The region spanning 703-786 (AEGLPLAGQT…EQLKSYGIEA (84 aa)) is the BRCT domain.

Belongs to the NAD-dependent DNA ligase family. LigA subfamily. It depends on Mg(2+) as a cofactor. The cofactor is Mn(2+).

It carries out the reaction NAD(+) + (deoxyribonucleotide)n-3'-hydroxyl + 5'-phospho-(deoxyribonucleotide)m = (deoxyribonucleotide)n+m + AMP + beta-nicotinamide D-nucleotide.. DNA ligase that catalyzes the formation of phosphodiester linkages between 5'-phosphoryl and 3'-hydroxyl groups in double-stranded DNA using NAD as a coenzyme and as the energy source for the reaction. It is essential for DNA replication and repair of damaged DNA. In Ectopseudomonas mendocina (strain ymp) (Pseudomonas mendocina), this protein is DNA ligase.